The following is a 116-amino-acid chain: Flagellar transcriptional regulator FlhD (116 aa).

Belongs to the FlhD family. As to quaternary structure, homodimer; disulfide-linked. Forms a heterohexamer composed of two FlhC and four FlhD subunits. Each FlhC binds a FlhD dimer, forming a heterotrimer, and a hexamer assembles by dimerization of two heterotrimers.

The protein localises to the cytoplasm. In terms of biological role, functions in complex with FlhC as a master transcriptional regulator that regulates transcription of several flagellar and non-flagellar operons by binding to their promoter region. Activates expression of class 2 flagellar genes, including fliA, which is a flagellum-specific sigma factor that turns on the class 3 genes. Also regulates genes whose products function in a variety of physiological pathways. The chain is Flagellar transcriptional regulator FlhD from Xenorhabdus nematophila (Achromobacter nematophilus).